We begin with the raw amino-acid sequence, 232 residues long: tRNA (guanine-N(1)-)-methyltransferase (232 aa).

S-adenosyl-L-methionine is bound by residues glycine 112 and 132-137 (IGDYVL).

This sequence belongs to the RNA methyltransferase TrmD family. Homodimer.

Its subcellular location is the cytoplasm. It carries out the reaction guanosine(37) in tRNA + S-adenosyl-L-methionine = N(1)-methylguanosine(37) in tRNA + S-adenosyl-L-homocysteine + H(+). Functionally, specifically methylates guanosine-37 in various tRNAs. This Anaplasma phagocytophilum (strain HZ) protein is tRNA (guanine-N(1)-)-methyltransferase.